Consider the following 707-residue polypeptide: DNA ligase (707 aa).

NAD(+) is bound by residues D36–D40, S85–L86, and E116. K118 serves as the catalytic N6-AMP-lysine intermediate. NAD(+)-binding residues include R139, E180, K298, and K322. Zn(2+) is bound by residues C416, C419, C434, and C440. Positions A613–V707 constitute a BRCT domain.

The protein belongs to the NAD-dependent DNA ligase family. LigA subfamily. Mg(2+) is required as a cofactor. The cofactor is Mn(2+).

It catalyses the reaction NAD(+) + (deoxyribonucleotide)n-3'-hydroxyl + 5'-phospho-(deoxyribonucleotide)m = (deoxyribonucleotide)n+m + AMP + beta-nicotinamide D-nucleotide.. Functionally, DNA ligase that catalyzes the formation of phosphodiester linkages between 5'-phosphoryl and 3'-hydroxyl groups in double-stranded DNA using NAD as a coenzyme and as the energy source for the reaction. It is essential for DNA replication and repair of damaged DNA. This is DNA ligase from Nitrosospira multiformis (strain ATCC 25196 / NCIMB 11849 / C 71).